The chain runs to 270 residues: MWNSGFESYGSSSYGGAGGYTQSPGGFGSPAPSQAEKKSRARAQHIVPCTISQLLSATLVDEVFRIGNVEISQVTIVGIIRHAEKAPTNIVYKIDDMTAAPMDVRQWVDTDDTSSENTVVPPETYVKVAGHLRSFQNKKSLVAFKIMPLEDMNEFTTHILEVINAHMVLSKANSQPSAGRAPISNPGMSEAGNFGGNSFMPANGLTVAQNQVLNLIKACPRPEGLNFQDLKNQLKHMSVSSIKQAVDFLSNEGHIYSTVDDDHFKSTDAE.

The residue at position 1 (Met-1) is an N-acetylmethionine. Phosphoserine; by PRKDC occurs at positions 4 and 8. Thr-21 carries the phosphothreonine; by PRKDC modification. The tract at residues 21 to 41 (TQSPGGFGSPAPSQAEKKSRA) is disordered. Ser-23 carries the phosphoserine; by CDK2 modification. Ser-29 is subject to Phosphoserine; by CDK1. Residue Ser-33 is modified to Phosphoserine; by PRKDC. Glycyl lysine isopeptide (Lys-Gly) (interchain with G-Cter in ubiquitin) cross-links involve residues Lys-37 and Lys-38. The segment at residues 74-148 (VTIVGIIRHA…KSLVAFKIMP (75 aa)) is a DNA-binding region (OB). Positions 187 to 270 (GMSEAGNFGG…DDHFKSTDAE (84 aa)) are interaction with RAD52, TIPIN, UNG and XPA.

This sequence belongs to the replication factor A protein 2 family. As to quaternary structure, component of the replication protein A complex (RPA/RP-A), a heterotrimeric complex composed of RPA1, RPA2 and RPA3. Interacts with PRPF19; the PRP19-CDC5L complex is recruited to the sites of DNA repair where it ubiquitinates the replication protein A complex (RPA). Interacts with SERTAD3. Interacts with TIPIN. Interacts with TIMELESS. Interacts with PPP4R2; the interaction is direct, DNA damage-dependent and mediates the recruitment of the PP4 catalytic subunit PPP4C. Interacts (hyperphosphorylated) with RAD51. Interacts with SMARCAL1; the interaction is direct and mediates the recruitment to the RPA complex of SMARCAL1. Interacts with RAD52 and XPA; those interactions are direct and associate RAD52 and XPA to the RPA complex. Interacts with FBH1. Interacts with ETAA1; the interaction is direct and promotes ETAA1 recruitment at stalled replication forks. Interacts with RFWD3. Interacts with DDI2. Interacts (in unphosphorylated form via N-terminus) with EIF4EBP3; the interaction enhances EIF4EBP3-mediated inhibition of EIF4E-mediated mRNA nuclear export. Interacts with BRIP1/FANCJ via the RPA1 subunit; following DNA damage they colocalize in foci in the nucleus. Interacts with nuclear UNG (isoform 2); this interaction mediates UNG recruitment to RPA-coated single-stranded DNA at stalled replication forks. Differentially phosphorylated throughout the cell cycle, becoming phosphorylated at the G1-S transition and dephosphorylated in late mitosis. Mainly phosphorylated at Ser-23 and Ser-29, by cyclin A-CDK2 and cyclin B-CDK1, respectively during DNA replication and mitosis. Dephosphorylation may require the serine/threonine-protein phosphatase 4. Phosphorylation at Ser-23 and Ser-29 is a prerequisite for further phosphorylation. Becomes hyperphosphorylated on additional residues including Ser-4, Ser-8, Thr-21 and Ser-33 in response to DNA damage. Hyperphosphorylation is mediated by ATM, ATR and PRKDC. Primarily recruited to DNA repair nuclear foci as a hypophosphorylated form it undergoes subsequent hyperphosphorylation, catalyzed by ATR. Hyperphosphorylation is required for RAD51 recruitment to chromatin and efficient DNA repair. Phosphorylation at Thr-21 depends upon RFWD3 presence. In terms of processing, DNA damage-induced 'Lys-63'-linked polyubiquitination by PRPF19 mediates ATRIP recruitment to the RPA complex at sites of DNA damage and activation of ATR. Ubiquitinated by RFWD3 at stalled replication forks in response to DNA damage: ubiquitination by RFWD3 does not lead to degradation by the proteasome and promotes removal of the RPA complex from stalled replication forks, promoting homologous recombination.

Its subcellular location is the nucleus. The protein localises to the PML body. Its function is as follows. As part of the heterotrimeric replication protein A complex (RPA/RP-A), binds and stabilizes single-stranded DNA intermediates that form during DNA replication or upon DNA stress. It prevents their reannealing and in parallel, recruits and activates different proteins and complexes involved in DNA metabolism. Thereby, it plays an essential role both in DNA replication and the cellular response to DNA damage. In the cellular response to DNA damage, the RPA complex controls DNA repair and DNA damage checkpoint activation. Through recruitment of ATRIP activates the ATR kinase a master regulator of the DNA damage response. It is required for the recruitment of the DNA double-strand break repair factors RAD51 and RAD52 to chromatin in response to DNA damage. Also recruits to sites of DNA damage proteins like XPA and XPG that are involved in nucleotide excision repair and is required for this mechanism of DNA repair. Also plays a role in base excision repair (BER) probably through interaction with UNG. Also recruits SMARCAL1/HARP, which is involved in replication fork restart, to sites of DNA damage. May also play a role in telomere maintenance. RPA stimulates 5'-3' helicase activity of BRIP1/FANCJ. This is Replication protein A 32 kDa subunit (RPA2) from Homo sapiens (Human).